A 512-amino-acid chain; its full sequence is MNDLQFDSLKVFKCQNCHLPLQVDPTMLHLSKSQRELLLPREDRRPGVEEFNLRQESQDMLKKVKTGKEAKQLLKEDFQSSDFLFLRDIDDSIAEKDLKKGLEGDNDDRKSNEDSMVSELDVEDTAKTLSTQIERLSKLFEIMSTSESNIDYPICQECCNIMMKRLKTDYEKAVKERDLYFQFVKRIEKQQLDESDSSQLSLRQKEYTDQTKKINQERERLLLELTKKEQVEEELDAEIAELTRQISEKKANERATRKIDNAKQWDKMKLLNDISSLQYQYETELNKLDQLRKTNIYNESFRISHQGPFATICGLKLGSYEDHKVSYSEINAALGQLVLLLMTISSSLNIKISGYRLQPIGSTSKVSKFLADKEDWETYELYFSSNFSLEKIFKRETDFDKGMESLLDIVKQISLSFSTVVSSDTDINIQDERTRSNDSMLNGGANRNANLRADRLFTESELPYMIDGDRINGISVKLYGAEPNLEWTTAMKFLLTDAKWLLVFCSSKLSLQ.

Positions 294-511 (TNIYNESFRI…LVFCSSKLSL (218 aa)) are BARA.

The protein belongs to the beclin family. In terms of assembly, component of the autophagy-specific VPS34 PI3-kinase complex I composed of VPS15, VPS30, VPS34, ATG14 and ATG38; and of the VPS34 PI3-kinase complex II composed of VPS15, VPS30, VPS34 and VPS38.

The protein localises to the endosome membrane. It is found in the vacuole membrane. Its subcellular location is the preautophagosomal structure membrane. Required for cytoplasm to vacuole transport (Cvt), autophagy, nucleophagy, and mitophagy, as a part of the autophagy-specific VPS34 PI3-kinase complex I. This complex is essential to recruit the ATG8-phosphatidylinositol conjugate and the ATG12-ATG5 conjugate to the pre-autophagosomal structure. Also involved in endosome-to-Golgi retrograde transport as part of the VPS34 PI3-kinase complex II. This second complex is required for the endosome-to-Golgi retrieval of PEP1 and KEX2, and the recruitment of VPS5 and VPS7, two components of the retromer complex, to endosomal membranes (probably through the synthesis of a specific pool of phosphatidylinositol 3-phosphate recruiting the retromer to the endosomes). Required for survival and/or proliferation in kidneys but not brain. The chain is Vacuolar protein sorting-associated protein 30 from Candida glabrata (strain ATCC 2001 / BCRC 20586 / JCM 3761 / NBRC 0622 / NRRL Y-65 / CBS 138) (Yeast).